We begin with the raw amino-acid sequence, 416 residues long: Probable glucan 1,3-beta-glucosidase A (416 aa).

The N-terminal stretch at 1 to 22 (MFVESAKKALLALSLLAASAQA) is a signal peptide. N183 carries an N-linked (GlcNAc...) asparagine glycan. Catalysis depends on E210, which acts as the Proton donor. Intrachain disulfides connect C290-C415 and C316-C342. E308 acts as the Nucleophile in catalysis.

Belongs to the glycosyl hydrolase 5 (cellulase A) family. Monomer. It depends on Mn(2+) as a cofactor.

The protein resides in the secreted. It catalyses the reaction Successive hydrolysis of beta-D-glucose units from the non-reducing ends of (1-&gt;3)-beta-D-glucans, releasing alpha-glucose.. Functionally, beta-glucanases participate in the metabolism of beta-glucan, the main structural component of the cell wall. It could also function biosynthetically as a transglycosylase. In Aspergillus niger (strain ATCC MYA-4892 / CBS 513.88 / FGSC A1513), this protein is Probable glucan 1,3-beta-glucosidase A (exgA).